We begin with the raw amino-acid sequence, 914 residues long: Protein translocase subunit SecA (914 aa).

Residues Q86, 104–108 (GEGKT), and D512 contribute to the ATP site. Zn(2+)-binding residues include C898, C900, C909, and H910.

This sequence belongs to the SecA family. In terms of assembly, monomer and homodimer. Part of the essential Sec protein translocation apparatus which comprises SecA, SecYEG and auxiliary proteins SecDF-YajC and YidC. Zn(2+) serves as cofactor.

Its subcellular location is the cell inner membrane. It is found in the cytoplasm. The enzyme catalyses ATP + H2O + cellular proteinSide 1 = ADP + phosphate + cellular proteinSide 2.. Functionally, part of the Sec protein translocase complex. Interacts with the SecYEG preprotein conducting channel. Has a central role in coupling the hydrolysis of ATP to the transfer of proteins into and across the cell membrane, serving both as a receptor for the preprotein-SecB complex and as an ATP-driven molecular motor driving the stepwise translocation of polypeptide chains across the membrane. This is Protein translocase subunit SecA from Bordetella petrii (strain ATCC BAA-461 / DSM 12804 / CCUG 43448).